The primary structure comprises 317 residues: Melanocyte-stimulating hormone receptor (317 aa).

At 1–37 the chain is on the extracellular side; sequence MPVQGSQRRLLGSLNSTPTATPRLGLAANQTGARCLE. Asn29 carries an N-linked (GlcNAc...) asparagine glycan. A helical membrane pass occupies residues 38-63; sequence VSIPDGLFLSLGLVSLVENVLVVVAI. Residues 64-72 lie on the Cytoplasmic side of the membrane; that stretch reads ARNRNLHSP. The helical transmembrane segment at 73 to 93 threads the bilayer; it reads MYCFICCLALSDLLVSGSNML. Residues 94-118 are Extracellular-facing; the sequence is ETAVILLLEAGALAARAAVVQQLDN. A helical membrane pass occupies residues 119-140; sequence VIDVITCSSMLSSLCFLGAIAV. The Cytoplasmic segment spans residues 141–163; it reads DRYISIFYALRYHSIVTLRRARR. Residues 164–183 form a helical membrane-spanning segment; the sequence is VVAAIWVASVLFSTLFIAYC. Topologically, residues 184–191 are extracellular; sequence DHAAVLLS. The helical transmembrane segment at 192–211 threads the bilayer; it reads LVVFFLAMLVLMAVLYVHML. At 212 to 240 the chain is on the cytoplasmic side; that stretch reads ARACQHAQGIAQLHKRQRPAHQGVGLKGA. A helical transmembrane segment spans residues 241 to 266; that stretch reads ATLTILLGIFFLCWGPFFLHLTLIVL. Topologically, residues 267 to 279 are extracellular; that stretch reads CPQHPTCSCIFKN. The chain crosses the membrane as a helical span at residues 280–300; that stretch reads FNLFLTLIICNAIIDPLIYAF. Topologically, residues 301–317 are cytoplasmic; it reads RSQELRRTLKKVLLCSW. Cys315 carries the S-palmitoyl cysteine lipid modification.

This sequence belongs to the G-protein coupled receptor 1 family. In terms of assembly, interacts with MGRN1, but does not undergo MGRN1-mediated ubiquitination; this interaction competes with GNAS-binding and thus inhibits agonist-induced cAMP production. Interacts with OPN3; the interaction results in a decrease in MC1R-mediated cAMP signaling and ultimately a decrease in melanin production in melanocytes.

The protein localises to the cell membrane. Functionally, receptor for MSH (alpha, beta and gamma) and ACTH. The activity of this receptor is mediated by G proteins which activate adenylate cyclase. Mediates melanogenesis, the production of eumelanin (black/brown) and phaeomelanin (red/yellow), via regulation of cAMP signaling in melanocytes. The chain is Melanocyte-stimulating hormone receptor (MC1R) from Trachypithecus auratus (Javan langur).